The following is a 170-amino-acid chain: RNA pyrophosphohydrolase (170 aa).

One can recognise a Nudix hydrolase domain in the interval 6-149; sequence GFRPNVGIIL…KRDVYRRALK (144 aa). The short motif at 39-60 is the Nudix box element; that stretch reads GGIKHNESPENALYRELEEEVG.

It belongs to the Nudix hydrolase family. RppH subfamily. The cofactor is a divalent metal cation.

In terms of biological role, accelerates the degradation of transcripts by removing pyrophosphate from the 5'-end of triphosphorylated RNA, leading to a more labile monophosphorylated state that can stimulate subsequent ribonuclease cleavage. The chain is RNA pyrophosphohydrolase from Saccharophagus degradans (strain 2-40 / ATCC 43961 / DSM 17024).